The primary structure comprises 708 residues: Metal-pseudopaline receptor CntO (708 aa).

Residues 1–21 (MRVSVSLVLGVGLGCSSPALW) form the signal peptide. The region spanning 63–169 (RIEDIPQAIS…PGGTVNLVTK (107 aa)) is the TBDR plug domain. The TBDR beta-barrel domain maps to 174–708 (ERFARLHASA…NLTMSLTLNY (535 aa)).

This sequence belongs to the TonB-dependent receptor family.

It localises to the cell outer membrane. Its function is as follows. Transports the metallophore pseudopaline, which is involved in the acquisition of nickel and zinc, and thus enables bacterial growth inside the host, where metal access is limited. Is probably involved in the import of pseudopaline-metal complexes. This chain is Metal-pseudopaline receptor CntO, found in Pseudomonas aeruginosa (strain ATCC 15692 / DSM 22644 / CIP 104116 / JCM 14847 / LMG 12228 / 1C / PRS 101 / PAO1).